Reading from the N-terminus, the 99-residue chain is Imizoquin biosynthesis cluster protein A (99 aa).

The protein operates within secondary metabolite biosynthesis. Part of the gene cluster that mediates the biosynthesis of imizoquins A to D, tripeptide-derived alkaloids that serve a protective role against oxidative stress that are essential for normal germination. ImqB is a canonical three-module NRPS that assembles the tripeptide backbone of the imizoquins via condensation of Trp, Tyr, and Leu-derived precursors. N-methylation by imqF and phenol oxidation by imqC, followed by cyclization via the FAD-dependent oxidase imqH carry out the three-step transformation of L-tyrosine into tetrahydroisoquinoline. Importantly, this sequence requires the presence of a free amine in the tyrosine moiety, indicating that isoquinoline formation occurs prior to peptide bond formation. The imidazolidin-4-one ring of imizoquins could form following additional oxidation of the methyl-derived bridgehead carbon by imqH. Lastly, O-methylation by imqG and leucine hydroxylation by imqE complete biosynthesis of the imizoquins. This is Imizoquin biosynthesis cluster protein A from Aspergillus flavus (strain ATCC 200026 / FGSC A1120 / IAM 13836 / NRRL 3357 / JCM 12722 / SRRC 167).